The following is a 544-amino-acid chain: MTDIQIAQAAKKENIVEIAKKLGLTEDDIEQYGKYKAKVNLDVLQKNKRPNGKLILVTAITPTPAGEGKSTVTIGLTQALNKMGKLSAAAIREPSLGPVFGMKGGAAGGGYAQVVPMEDINLHFTGDMHAIGIAHNLISACIDNHINSGNALGIDVTKITWKRVVDMNDRALRNIVIGLGGKANGYPRQDSFQITVGSEIMAILCLSNSITELKEKIKNIVIGTSVTGKLIKVGDFHIEGAVAALLKDAIKPNLVQTLENTPVFIHGGPFANIAHGCNSILATKMALKLTDYVVTEAGFAADLGAEKFIDIKCRLGGLKPDCAVIVATVRALEHHGKGDLKAGLENLDKHIDNIKNKYKLPLVVAINKFITDTDEQINMIEKFCNERGAEVSLCEVWAKGGEGGIDLAEKVLKAIDNNKTEFDYFYDINLTIKEKIEKICKEIYGADGVIFAPATKKVFDVIEAEGLNKLPVCMSKTQKSISDNPALLGKPTGFKVTINDLRLAVGAGFVIAMAGDIIDMPGLPKKPSAEVIDIDENGVISGLF.

Residue 63–70 (TPAGEGKS) coordinates ATP.

The protein belongs to the formate--tetrahydrofolate ligase family.

The enzyme catalyses (6S)-5,6,7,8-tetrahydrofolate + formate + ATP = (6R)-10-formyltetrahydrofolate + ADP + phosphate. It functions in the pathway one-carbon metabolism; tetrahydrofolate interconversion. The sequence is that of Formate--tetrahydrofolate ligase from Fusobacterium nucleatum subsp. nucleatum (strain ATCC 25586 / DSM 15643 / BCRC 10681 / CIP 101130 / JCM 8532 / KCTC 2640 / LMG 13131 / VPI 4355).